A 255-amino-acid chain; its full sequence is Probable transcriptional regulatory protein CMS0715 (255 aa).

The protein belongs to the TACO1 family.

The protein resides in the cytoplasm. This Clavibacter sepedonicus (Clavibacter michiganensis subsp. sepedonicus) protein is Probable transcriptional regulatory protein CMS0715.